A 317-amino-acid chain; its full sequence is Sperm acrosome membrane-associated protein 6 (317 aa).

A signal peptide spans 1 to 18; the sequence is MFVFIAKLLIFSSVITSA. The Extracellular segment spans residues 19-281; sequence FTCYQCFIDE…PSFSFWLPRP (263 aa). Intrachain disulfides connect Cys-21/Cys-143, Cys-24/Cys-146, Cys-35/Cys-51, Cys-128/Cys-151, and Cys-132/Cys-157. Asn-29 is a glycosylation site (N-linked (GlcNAc...) asparagine). The region spanning 123–237 is the Ig-like domain; it reads PRVSGCLPPC…EVLSQEQSLV (115 aa). Asn-168 carries N-linked (GlcNAc...) asparagine glycosylation. A disulfide bond links Cys-174 and Cys-227. Residues 282–302 form a helical membrane-spanning segment; the sequence is ALLITCLTATMLLIFLSLGAM. The Cytoplasmic portion of the chain corresponds to 303–317; that stretch reads CRLWYQIRTNVSNPA.

This sequence belongs to the SPACA6 family. In terms of assembly, forms a complex with izumo1 and tmem81 on spermatocyte cell membrane. The complex binds to oocyte protein bncr. Expressed in testis.

The protein localises to the cytoplasmic vesicle. It is found in the secretory vesicle. It localises to the acrosome membrane. Its function is as follows. Sperm protein required for fusion of sperm with the egg membrane during fertilization. May regulate the expression of sperm surface protein DCST2. The polypeptide is Sperm acrosome membrane-associated protein 6 (Danio rerio (Zebrafish)).